The primary structure comprises 213 residues: Probable thymidylate kinase 2 (213 aa).

Residue 10 to 17 (GIDGSGKS) participates in ATP binding.

It belongs to the thymidylate kinase family.

The enzyme catalyses dTMP + ATP = dTDP + ADP. This is Probable thymidylate kinase 2 (tmk2) from Saccharolobus solfataricus (strain ATCC 35092 / DSM 1617 / JCM 11322 / P2) (Sulfolobus solfataricus).